A 229-amino-acid chain; its full sequence is MFSTTSIVLWFTILLPVTLPVSIDNRDLLLKRHVEPNDIQFFNQGVRSSLSYIYQKRDVSDSDNEQVLRKSKKKKKTTSTGTPGNENTTDFASAQEFEKWEGDREGWQISAGLYFDKAIASDSCDSDSEDEDEGRKKFWIFTDDAPVDNENLIVSSEDKLELNYISSGKNLEGLTKVIRKAKGNSTTYNQSKIKFNVDAQGEDQFESGFGSLIPYNSFYLYILLFCIIF.

The signal sequence occupies residues 1 to 20 (MFSTTSIVLWFTILLPVTLP). The segment at 63–92 (DNEQVLRKSKKKKKTTSTGTPGNENTTDFA) is disordered. A compositionally biased stretch (polar residues) spans 81–92 (GTPGNENTTDFA). Residues Asn-87, Asn-184, and Asn-189 are each glycosylated (N-linked (GlcNAc...) asparagine). A lipid anchor (GPI-anchor amidated glycine) is attached at Gly-208. Positions 209–229 (FGSLIPYNSFYLYILLFCIIF) are cleaved as a propeptide — removed in mature form.

It is found in the cell membrane. In terms of biological role, predicted GPI-anchored protein which may have a role during host infection. The protein is Predicted GPI-anchored protein 19 (PGA19) of Candida albicans (strain SC5314 / ATCC MYA-2876) (Yeast).